We begin with the raw amino-acid sequence, 37 residues long: Large ribosomal subunit protein bL36 (37 aa).

The protein belongs to the bacterial ribosomal protein bL36 family.

This is Large ribosomal subunit protein bL36 from Staphylococcus aureus (strain Mu3 / ATCC 700698).